A 117-amino-acid chain; its full sequence is Photosystem II reaction center Psb28 protein (117 aa).

Belongs to the Psb28 family. In terms of assembly, part of the photosystem II complex.

It localises to the cellular thylakoid membrane. The polypeptide is Photosystem II reaction center Psb28 protein (Prochlorococcus marinus (strain MIT 9211)).